Here is a 399-residue protein sequence, read N- to C-terminus: MRFWFVLLALLGKEIYAYENERNALNATAANKVCGLSTYLKGIAHRVNSESAVVTEKLSDLKMRSIQLQLSVMRNRVPSGEQDCKDIRTLLKTVLRNEFTFQQELEEMRNASALAAAAAGLAAGRLEEWIFVFAQAAGRSSQFCISVGKTGPAEYNNLQECFDGTIGPETLYKIEDSRVKESAKTSLQLHEVLSSISFGSLGVKNIRGGNGKDGCNLVRTDTDGVLEGGSPTRHNLTWGGGVMNFGSYQNGSMYVEGGEYGDATEYGAVRWTEDPSKVSIFKDVIRLFARFQEAKNAVVKKIKTTVDELTKCIGQKEAELTNDQLYEEFIWETINRLELSKRVSEQSAFGEEEETIVKFNYTAEPVRGPFTVAGANAAAIHLSVSTAALCRSALLLGVL.

The first 17 residues, 1–17 (MRFWFVLLALLGKEIYA), serve as a signal peptide directing secretion. N-linked (GlcNAc...) asparagine glycosylation is found at N26 and N110. Disulfide bonds link C34/C161, C84/C312, and C144/C215. N-linked (GlcNAc...) asparagine glycosylation is found at N235, N250, and N360. N376 carries GPI-anchor amidated asparagine lipidation. A propeptide spans 377 to 399 (AAAIHLSVSTAALCRSALLLGVL) (removed in mature form).

As to quaternary structure, heterodimer composed of ESAG6 and ESAG7. N-glycosylated. Glycosylation is dispensable for heterodimer formation and host transferrin binding.

The protein localises to the cell membrane. The protein resides in the flagellar pocket. In terms of biological role, transferrin receptor subunit involved in receptor-mediated acquisition of iron from the environment by binding host TF/transferrin. In Trypanosoma brucei brucei, this protein is Transferrin receptor subunit ESAG6.